The following is an 827-amino-acid chain: Thymine dioxygenase JBP1 (827 aa).

Positions 62-264 are thymine dioxygenase; it reads QIIGVVLREA…RLTCVFYYRA (203 aa). Residues His189, Asp191, and His239 each contribute to the Fe cation site. Position 255 (Arg255) interacts with 2-oxoglutarate. 2 disordered regions span residues 364–383 and 539–568; these read PLRG…PRPL and PEEK…HEKR. The interval 392–561 is DNA-binding JBP1 domain; it reads TNLMVSTAVE…IEEARRHGMP (170 aa). The span at 539–557 shows a compositional bias: basic and acidic residues; sequence PEEKKRRMERKQRIEEARR.

Belongs to the TET family. JBP1 subfamily. In terms of assembly, monomer. Binds to DNA as a monomer. The cofactor is Fe(2+).

The protein localises to the nucleus. The catalysed reaction is thymine + 2-oxoglutarate + O2 = 5-hydroxymethyluracil + succinate + CO2. Its function is as follows. Dioxygenase that catalyzes the first step of DNA base J (beta-d-glucosyl-HOMedU) biosynthesis by converting thymine to 5-hydroxymethyluracil (HOMedU). DNA base J is a hypermodified thymidine residue found in the genome of kinetoplastid parasites, which is localized primarily to repetitive DNA, namely the telomeres, and is implicated in the regulation of antigenic variation. Also specifically binds to base J-containing DNA (J-DNA). Involved in propagation and maintenance of DNA base J synthesis initiated by JBP2 by specifically binding already synthesized DNA base J and propagating J synthesis. Thymine dioxygenase activity and J-DNA-binding are independent functions. This chain is Thymine dioxygenase JBP1 (JBP1), found in Leishmania tarentolae (Sauroleishmania tarentolae).